Here is a 1037-residue protein sequence, read N- to C-terminus: Mediator of RNA polymerase II transcription subunit 14 (1037 aa).

It belongs to the Mediator complex subunit 14 family. Component of the Mediator complex.

It localises to the nucleus. Component of the Mediator complex, a coactivator involved in the regulated transcription of nearly all RNA polymerase II-dependent genes. Mediator functions as a bridge to convey information from gene-specific regulatory proteins to the basal RNA polymerase II transcription machinery. Mediator is recruited to promoters by direct interactions with regulatory proteins and serves as a scaffold for the assembly of a functional preinitiation complex with RNA polymerase II and the general transcription factors. The protein is Mediator of RNA polymerase II transcription subunit 14 (RGR1) of Candida glabrata (strain ATCC 2001 / BCRC 20586 / JCM 3761 / NBRC 0622 / NRRL Y-65 / CBS 138) (Yeast).